A 93-amino-acid polypeptide reads, in one-letter code: UPF0223 protein LACR_0546 (93 aa).

This sequence belongs to the UPF0223 family.

This chain is UPF0223 protein LACR_0546, found in Lactococcus lactis subsp. cremoris (strain SK11).